The following is a 225-amino-acid chain: Small ribosomal subunit protein uS3 (225 aa).

The KH type-2 domain maps to 16–85; sequence VCEYVVKETE…TPQIEVKDVK (70 aa). Residues 202-225 form a disordered region; sequence EVGTESKADQTDVEGRETGNAEES. Residues 205 to 225 show a composition bias toward basic and acidic residues; the sequence is TESKADQTDVEGRETGNAEES.

Belongs to the universal ribosomal protein uS3 family. As to quaternary structure, part of the 30S ribosomal subunit.

Its function is as follows. Binds the lower part of the 30S subunit head. The chain is Small ribosomal subunit protein uS3 from Thermoplasma acidophilum (strain ATCC 25905 / DSM 1728 / JCM 9062 / NBRC 15155 / AMRC-C165).